The primary structure comprises 826 residues: Glycerol-3-phosphate acyltransferase 1, mitochondrial (826 aa).

Residues Met1–Gly87 lie on the Cytoplasmic side of the membrane. The tract at residues Asn80–Val120 is important for mitochondrial localization. An intramembrane segment occupies Leu88 to Arg118. Over Asp119–Leu826 the chain is Cytoplasmic. Positions His230 to Asp235 match the HXXXXD motif motif. Arg278, Arg279, Lys288, Arg293, and Arg328 together coordinate CoA. The residue at position 380 (Ser380) is a Phosphoserine. Residue Arg462 participates in CoA binding. Phosphoserine occurs at positions 686 and 693. An N6-acetyllysine mark is found at Lys778 and Lys782.

The protein belongs to the GPAT/DAPAT family.

Its subcellular location is the mitochondrion outer membrane. The catalysed reaction is sn-glycerol 3-phosphate + an acyl-CoA = a 1-acyl-sn-glycero-3-phosphate + CoA. It catalyses the reaction (9Z,12Z)-octadecadienoyl-CoA + sn-glycerol 3-phosphate = 1-(9Z,12Z)-octadecadienoyl-sn-glycero-3-phosphate + CoA. It carries out the reaction sn-glycerol 3-phosphate + (9Z)-octadecenoyl-CoA = 1-(9Z-octadecenoyl)-sn-glycero-3-phosphate + CoA. The enzyme catalyses sn-glycerol 3-phosphate + octadecanoyl-CoA = 1-octadecanoyl-sn-glycero-3-phosphate + CoA. The catalysed reaction is sn-glycerol 3-phosphate + hexadecanoyl-CoA = 1-hexadecanoyl-sn-glycero-3-phosphate + CoA. It catalyses the reaction dodecanoyl-CoA + sn-glycerol 3-phosphate = 1-dodecanoyl-sn-glycerol 3-phosphate + CoA. It carries out the reaction 1-acyl-sn-glycero-3-phospho-(1'-sn-glycerol) + an acyl-CoA = a 1,2-diacyl-sn-glycero-3-phospho-(1'-sn-glycerol) + CoA. Its pathway is phospholipid metabolism; CDP-diacylglycerol biosynthesis; CDP-diacylglycerol from sn-glycerol 3-phosphate: step 1/3. Functionally, mitochondrial membrane protein that catalyzes the essential first step of biosynthesis of glycerolipids such as triglycerides, phosphatidic acids and lysophosphatidic acids. Esterifies acyl-group from acyl-coenzyme A (acyl-CoA) to the sn-1 position of glycerol-3-phosphate, to produce lysophosphatidic acid. Has a narrow hydrophobic binding cleft that selects for a linear acyl chain. Catalytic activity is higher for substrates with a 16-carbon acyl chain. The chain is Glycerol-3-phosphate acyltransferase 1, mitochondrial from Sus scrofa (Pig).